Reading from the N-terminus, the 318-residue chain is MEWENQTILVEFFLKGHSVHPRLELLFFVLIFIMYVVILLGNGTLILISILDPHLHTPMYFFLGNLSFLDICYTTTSIPSTLVSFLSERKTISFSGCAVQMFLGLAMGTTECVLLGMMAFDRYVAICNPLRYPIIMSKNAYVPMAVGSWFAGIVNSAVQTTFVVQLPFCRKNVINHFSCEILAVMKLACADISGNEFLMLVATILFTLMPLLLIVISYSLIISSILKIHSSEGRSKAFSTCSAHLTVVIIFYGTILFMYMKPKSKETLNSDDLDATDKIISMFYGVMTPMMNPLIYSLRNKDVKEAVKHLPNRRFFSK.

The Extracellular portion of the chain corresponds to 1 to 25; the sequence is MEWENQTILVEFFLKGHSVHPRLEL. The N-linked (GlcNAc...) asparagine glycan is linked to Asn5. A helical membrane pass occupies residues 26–46; that stretch reads LFFVLIFIMYVVILLGNGTLI. Residues 47 to 54 are Cytoplasmic-facing; it reads LISILDPH. The chain crosses the membrane as a helical span at residues 55 to 75; that stretch reads LHTPMYFFLGNLSFLDICYTT. The Extracellular portion of the chain corresponds to 76–99; it reads TSIPSTLVSFLSERKTISFSGCAV. A disulfide bridge links Cys97 with Cys189. A helical membrane pass occupies residues 100-120; sequence QMFLGLAMGTTECVLLGMMAF. The Cytoplasmic segment spans residues 121–139; sequence DRYVAICNPLRYPIIMSKN. Residues 140-160 form a helical membrane-spanning segment; the sequence is AYVPMAVGSWFAGIVNSAVQT. Over 161-197 the chain is Extracellular; sequence TFVVQLPFCRKNVINHFSCEILAVMKLACADISGNEF. A helical membrane pass occupies residues 198–217; it reads LMLVATILFTLMPLLLIVIS. Topologically, residues 218 to 237 are cytoplasmic; it reads YSLIISSILKIHSSEGRSKA. The helical transmembrane segment at 238–258 threads the bilayer; the sequence is FSTCSAHLTVVIIFYGTILFM. Residues 259–277 lie on the Extracellular side of the membrane; that stretch reads YMKPKSKETLNSDDLDATD. The chain crosses the membrane as a helical span at residues 278 to 298; it reads KIISMFYGVMTPMMNPLIYSL. Topologically, residues 299-318 are cytoplasmic; the sequence is RNKDVKEAVKHLPNRRFFSK.

Belongs to the G-protein coupled receptor 1 family.

It is found in the cell membrane. Odorant receptor. This Homo sapiens (Human) protein is Olfactory receptor 13C9 (OR13C9).